A 386-amino-acid polypeptide reads, in one-letter code: Mannitol-1-phosphate 5-dehydrogenase (386 aa).

4-15 (AIHFGGGNIGRG) contacts NAD(+). K211 is a catalytic residue.

It belongs to the mannitol dehydrogenase family. As to quaternary structure, monomer.

The catalysed reaction is D-mannitol 1-phosphate + NAD(+) = beta-D-fructose 6-phosphate + NADH + H(+). Functionally, catalyzes the NAD(H)-dependent interconversion of D-fructose 6-phosphate and D-mannitol 1-phosphate in the mannitol metabolic pathway. The polypeptide is Mannitol-1-phosphate 5-dehydrogenase (mpdA) (Emericella nidulans (strain FGSC A4 / ATCC 38163 / CBS 112.46 / NRRL 194 / M139) (Aspergillus nidulans)).